Here is a 91-residue protein sequence, read N- to C-terminus: Small ribosomal subunit protein uS19 (91 aa).

The protein belongs to the universal ribosomal protein uS19 family.

Its function is as follows. Protein S19 forms a complex with S13 that binds strongly to the 16S ribosomal RNA. This is Small ribosomal subunit protein uS19 from Psychrobacter sp. (strain PRwf-1).